Consider the following 201-residue polypeptide: Imidazoleglycerol-phosphate dehydratase (201 aa).

This sequence belongs to the imidazoleglycerol-phosphate dehydratase family.

The protein localises to the cytoplasm. It carries out the reaction D-erythro-1-(imidazol-4-yl)glycerol 3-phosphate = 3-(imidazol-4-yl)-2-oxopropyl phosphate + H2O. The protein operates within amino-acid biosynthesis; L-histidine biosynthesis; L-histidine from 5-phospho-alpha-D-ribose 1-diphosphate: step 6/9. In Synechococcus sp. (strain CC9311), this protein is Imidazoleglycerol-phosphate dehydratase.